The following is a 352-amino-acid chain: Cellular tumor antigen p53 (352 aa).

The interval 1–48 (MDPVPDLPESQGSFQELWETVSYPPLETLSLPTVNEPTGSWVATGDMF) is transcription activation (acidic). Residues 87–273 (DYPGSYELEL…KTEEESRQKT (187 aa)) mediate DNA binding. The Zn(2+) site is built by C161, H164, C220, and C224. Residues 254–261 (RICACPGR) form an interaction with DNA region. Basic and acidic residues predominate over residues 262–271 (DRKTEEESRQ). The tract at residues 262-303 (DRKTEEESRQKTQPKKRKVTPNTSSSKRKKSHSSGEEEDNRE) is disordered. A Bipartite nuclear localization signal motif is present at residues 276–291 (KKRKVTPNTSSSKRKK). The oligomerization stretch occupies residues 302–331 (REVFHFEVYGRERYEFLKKINDGLELLEKE). The Nuclear export signal motif lies at 316 to 327 (EFLKKINDGLEL). Residues 330-352 (KESKSKNKDSGMVPSSGKKLKSN) are disordered. The interval 334–350 (SKNKDSGMVPSSGKKLK) is basic (repression of DNA-binding). A Phosphoserine modification is found at S351.

Belongs to the p53 family. Binds DNA as a homotetramer. It depends on Zn(2+) as a cofactor.

It is found in the cytoplasm. The protein resides in the nucleus. Multifunctional transcription factor that induces cell cycle arrest, DNA repair or apoptosis upon binding to its target DNA sequence. Acts as a tumor suppressor in many tumor types; induces growth arrest or apoptosis depending on the physiological circumstances and cell type. Negatively regulates cell division by controlling expression of a set of genes required for this process. One of the activated genes is an inhibitor of cyclin-dependent kinases. Apoptosis induction seems to be mediated either by stimulation of BAX and FAS antigen expression, or by repression of Bcl-2 expression. In Oryzias latipes (Japanese rice fish), this protein is Cellular tumor antigen p53 (tp53).